The chain runs to 346 residues: Methylthioribose-1-phosphate isomerase (346 aa).

Residues 46 to 48 (RGA), Arg-89, and Gln-196 each bind substrate. The Proton donor role is filled by Asp-237. Residue 247–248 (NK) coordinates substrate.

Belongs to the eIF-2B alpha/beta/delta subunits family. MtnA subfamily.

The enzyme catalyses 5-(methylsulfanyl)-alpha-D-ribose 1-phosphate = 5-(methylsulfanyl)-D-ribulose 1-phosphate. The protein operates within amino-acid biosynthesis; L-methionine biosynthesis via salvage pathway; L-methionine from S-methyl-5-thio-alpha-D-ribose 1-phosphate: step 1/6. Its function is as follows. Catalyzes the interconversion of methylthioribose-1-phosphate (MTR-1-P) into methylthioribulose-1-phosphate (MTRu-1-P). The polypeptide is Methylthioribose-1-phosphate isomerase (Geobacter metallireducens (strain ATCC 53774 / DSM 7210 / GS-15)).